The chain runs to 324 residues: Mitochondrial thiamine pyrophosphate carrier 1 (324 aa).

Solcar repeat units follow at residues 12-110 (GNRI…ISSA), 119-205 (PQPV…LRSP), and 212-307 (PFGT…VLGL). 6 consecutive transmembrane segments (helical) span residues 15–35 (IQVV…VAPL), 79–99 (ITGL…YGGI), 125–145 (FISG…LDLL), 182–202 (TAAI…YEAL), 218–238 (AGAG…LDLV), and 282–299 (GLTV…VTMW).

This sequence belongs to the mitochondrial carrier (TC 2.A.29) family.

It is found in the mitochondrion inner membrane. In terms of biological role, mitochondrial transporter that mediates uptake of thiamine pyrophosphate (ThPP) into mitochondria. This chain is Mitochondrial thiamine pyrophosphate carrier 1 (TPC1), found in Ajellomyces capsulatus (strain NAm1 / WU24) (Darling's disease fungus).